The sequence spans 137 residues: Small ribosomal subunit protein uS9 (137 aa).

A disordered region spans residues 114 to 137 (DSRMKERKKPGLRGARRGVQFSKR). Over residues 118–137 (KERKKPGLRGARRGVQFSKR) the composition is skewed to basic residues.

Belongs to the universal ribosomal protein uS9 family.

The sequence is that of Small ribosomal subunit protein uS9 from Rhodopirellula baltica (strain DSM 10527 / NCIMB 13988 / SH1).